A 27-amino-acid chain; its full sequence is GFGSLFKFLGKKLAKTVAKQAAKKQME.

As to expression, expressed by the venom gland.

Its subcellular location is the secreted. This Cupiennius salei (American wandering spider) protein is Cupiennin-3c.